Consider the following 501-residue polypeptide: GTPase Obg (501 aa).

Residues 2 to 159 (NRFIDRVVLH…HDLILELKSM (158 aa)) enclose the Obg domain. In terms of domain architecture, OBG-type G spans 160–341 (ADVGLVGFPS…LKYKLLEIVQ (182 aa)). GTP contacts are provided by residues 166–173 (GFPSAGKS), 191–195 (FTTLQ), 212–215 (DVPG), 292–295 (NKAD), and 322–324 (SAV). Ser-173 and Thr-193 together coordinate Mg(2+). The OCT domain occupies 362-442 (VDHRTKGQFQ…IGGISFEWEP (81 aa)).

This sequence belongs to the TRAFAC class OBG-HflX-like GTPase superfamily. OBG GTPase family. In terms of assembly, monomer. It depends on Mg(2+) as a cofactor.

Its subcellular location is the cytoplasm. In terms of biological role, an essential GTPase which binds GTP, GDP and possibly (p)ppGpp with moderate affinity, with high nucleotide exchange rates and a fairly low GTP hydrolysis rate. Plays a role in control of the cell cycle, stress response, ribosome biogenesis and in those bacteria that undergo differentiation, in morphogenesis control. The protein is GTPase Obg of Corynebacterium glutamicum (strain R).